Consider the following 419-residue polypeptide: DNA ligase (419 aa).

Residues 1–120 form an NTD region; sequence MLNHFPGHCS…ARQKRGAHTN (120 aa). Positions 121-317 are AD domain; the sequence is TGMIPPMLVK…NYHSAHLAKL (197 aa). The active-site N6-AMP-lysine intermediate is Lys151. Positions 318 to 419 are OB domain; it reads KPLLDAEFIL…REPINVLEII (102 aa).

It belongs to the ATP-dependent DNA ligase family.

It is found in the virion. The enzyme catalyses ATP + (deoxyribonucleotide)n-3'-hydroxyl + 5'-phospho-(deoxyribonucleotide)m = (deoxyribonucleotide)n+m + AMP + diphosphate.. In terms of biological role, very low-fidelity DNA ligase that seals nicks in double-stranded DNA during DNA repair. Together with the viral repair DNA polymerase X, fills the single nucleotide gaps generated by the AP endonuclease. It is not essential for viral replication and recombination. Displays a very low adenylation activity towards DNA with 3'-dideoxy- or 3'-amino-terminated nicks compared to regular nick DNA. This Ornithodoros (relapsing fever ticks) protein is DNA ligase.